The sequence spans 557 residues: Formate--tetrahydrofolate ligase (557 aa).

Position 67–74 (threonine 67–threonine 74) interacts with ATP.

Belongs to the formate--tetrahydrofolate ligase family.

It carries out the reaction (6S)-5,6,7,8-tetrahydrofolate + formate + ATP = (6R)-10-formyltetrahydrofolate + ADP + phosphate. It functions in the pathway one-carbon metabolism; tetrahydrofolate interconversion. The sequence is that of Formate--tetrahydrofolate ligase from Cereibacter sphaeroides (strain ATCC 17025 / ATH 2.4.3) (Rhodobacter sphaeroides).